The chain runs to 189 residues: UPF0301 protein CCA_00630 (189 aa).

Belongs to the UPF0301 (AlgH) family.

This Chlamydia caviae (strain ATCC VR-813 / DSM 19441 / 03DC25 / GPIC) (Chlamydophila caviae) protein is UPF0301 protein CCA_00630.